The chain runs to 363 residues: Peptide chain release factor 2 (363 aa).

Residue Gln-251 is modified to N5-methylglutamine.

The protein belongs to the prokaryotic/mitochondrial release factor family. In terms of processing, methylated by PrmC. Methylation increases the termination efficiency of RF2.

It is found in the cytoplasm. In terms of biological role, peptide chain release factor 2 directs the termination of translation in response to the peptide chain termination codons UGA and UAA. This chain is Peptide chain release factor 2, found in Helicobacter acinonychis (strain Sheeba).